The chain runs to 554 residues: Hydroxylamine reductase (554 aa).

Cys-3, Cys-6, Cys-18, and Cys-25 together coordinate [2Fe-2S] cluster. Hybrid [4Fe-2O-2S] cluster is bound by residues His-252, Glu-276, Cys-320, Cys-408, Cys-436, Cys-461, Glu-495, and Lys-497. Cysteine persulfide is present on Cys-408.

The protein belongs to the HCP family. The cofactor is [2Fe-2S] cluster. Hybrid [4Fe-2O-2S] cluster serves as cofactor.

The protein resides in the cytoplasm. It carries out the reaction A + NH4(+) + H2O = hydroxylamine + AH2 + H(+). Catalyzes the reduction of hydroxylamine to form NH(3) and H(2)O. The protein is Hydroxylamine reductase of Shewanella amazonensis (strain ATCC BAA-1098 / SB2B).